The sequence spans 687 residues: Geranylgeranyl transferase type-2 subunit alpha 2 (687 aa).

PFTA repeat units follow at residues 38 to 72 (YTKEAIQLSAKLLITNPEFYTAWNYPKLAFESRLD), 83 to 117 (IIDEELGVVQNALERNVKSYGAWYHRKWVLSKKGH), 132 to 167 (YQKQAHQKQDDEKQDDPSRNFHAWNYRRFVVELTKT), 168 to 203 (SEEDELQYTTDMISDISFTIYSAWHYRSVLVSSLVA), and 214 to 248 (TIRRELDYVHSAIFTLEEKQSGWFYYLWLLDQTVK). LRR repeat units follow at residues 523–545 (MNNIICLRLNNLTLSRIAAVEKL), 546–567 (LFVQMLDLSHNELHSAEGLEAM), 568–591 (QLLCCLNLSHNRIRSFSALDSLRH), 592–616 (LKQLRVLDVSHNHICGELPVDTTRY), and 646–668 (LMKLKQLDIRGNDLIFAGEEFSS).

Belongs to the protein prenyltransferase subunit alpha family. As to quaternary structure, heterotrimer composed of the alpha subunit RGTA, the beta subunit RGTB and REP; within this trimer, RGTA and RGTB form the catalytic component, while REP mediates peptide substrate binding.

It carries out the reaction geranylgeranyl diphosphate + L-cysteinyl-[protein] = S-geranylgeranyl-L-cysteinyl-[protein] + diphosphate. The enzymatic reaction requires the aid of the Rab escort protein REP. Catalyzes the transfer of a geranylgeranyl moiety from geranylgeranyl diphosphate to both cysteines of Rab proteins with the C-terminal sequence -CCXX, CXXX, -XCCX and -XCXC, such as RABA1A, RABA2A, RABF2A and RABG2. Does not seem to be a functional Rab-GGT alpha subunit in vitro. In Arabidopsis thaliana (Mouse-ear cress), this protein is Geranylgeranyl transferase type-2 subunit alpha 2.